Consider the following 343-residue polypeptide: Probable dual-specificity RNA methyltransferase RlmN (343 aa).

Catalysis depends on glutamate 94, which acts as the Proton acceptor. Positions 100-330 (YDSRVTVCVS…ATVRMSMGSD (231 aa)) constitute a Radical SAM core domain. Cysteine 107 and cysteine 335 are oxidised to a cystine. Residues cysteine 114, cysteine 118, and cysteine 121 each coordinate [4Fe-4S] cluster. Residues 161–162 (GE), serine 193, 216–218 (SLH), and asparagine 292 contribute to the S-adenosyl-L-methionine site. Cysteine 335 acts as the S-methylcysteine intermediate in catalysis.

It belongs to the radical SAM superfamily. RlmN family. The cofactor is [4Fe-4S] cluster.

It localises to the cytoplasm. The enzyme catalyses adenosine(2503) in 23S rRNA + 2 reduced [2Fe-2S]-[ferredoxin] + 2 S-adenosyl-L-methionine = 2-methyladenosine(2503) in 23S rRNA + 5'-deoxyadenosine + L-methionine + 2 oxidized [2Fe-2S]-[ferredoxin] + S-adenosyl-L-homocysteine. It carries out the reaction adenosine(37) in tRNA + 2 reduced [2Fe-2S]-[ferredoxin] + 2 S-adenosyl-L-methionine = 2-methyladenosine(37) in tRNA + 5'-deoxyadenosine + L-methionine + 2 oxidized [2Fe-2S]-[ferredoxin] + S-adenosyl-L-homocysteine. In terms of biological role, specifically methylates position 2 of adenine 2503 in 23S rRNA and position 2 of adenine 37 in tRNAs. In Clostridioides difficile (strain 630) (Peptoclostridium difficile), this protein is Probable dual-specificity RNA methyltransferase RlmN.